Here is a 105-residue protein sequence, read N- to C-terminus: uncharacterized protein (105 aa).

This is an uncharacterized protein from Archaeoglobus fulgidus (strain ATCC 49558 / DSM 4304 / JCM 9628 / NBRC 100126 / VC-16).